Here is a 163-residue protein sequence, read N- to C-terminus: Small t antigen (163 aa).

Met1 carries the N-acetylmethionine; by host modification. One can recognise a J domain in the interval 12–76 (LLMELLGLPM…KSLNTDDGFS (65 aa)). The C4-type; atypical zinc-finger motif lies at 95 to 107 (CSFGSFSCKCLFC). The H1C3-type; atypical zinc-finger motif lies at 113 to 132 (HKQELTKKPKVWGDCLCFKC).

In terms of assembly, interacts with host PPP2R1A; the interaction inhibits PP2A activity.

The protein localises to the host cytoplasm. The protein resides in the host nucleus. In terms of biological role, promotes efficient viral genome replication by accelerating both G1 and S phase progression of the cell cycle. Inhibits host PP2A by binding to the A subunit, thereby displacing lower affinity regulatory B subunit. Inactivation of PP2A in turn results in the transactivation of cyclin A and cyclin D1 promoters. Late during the infection cycle, ST may induce dephosphorylation of host MTOR, leading to the inhibition of cap-dependent translation. May establish and maintain high levels of viral genomes during persistent infection in cell culture. The chain is Small t antigen from Saimiri boliviensis boliviensis (Bolivian squirrel monkey).